Consider the following 392-residue polypeptide: Odorant receptor 85f (392 aa).

The Cytoplasmic portion of the chain corresponds to 1 to 36; that stretch reads MEPVQYSYEDFARLPTTVFWIMGYDMLGVPKTRSRR. The helical transmembrane segment at 37-57 threads the bilayer; it reads ILYWIYRFLCLASHGVCVGVM. At 58–69 the chain is on the extracellular side; that stretch reads VFRMVEAKTIDN. Residue asparagine 69 is glycosylated (N-linked (GlcNAc...) asparagine). A helical membrane pass occupies residues 70 to 90; the sequence is VSLIMRYATLVTYIINSDTKF. Topologically, residues 91-130 are cytoplasmic; the sequence is ATVLQRSAIQSLNSKLAELYPKTTLDRIYHRVNDHYWTKS. Residues 131–151 form a helical membrane-spanning segment; the sequence is FVYLVIIYIGSSIMVVIGPII. Topologically, residues 152-179 are extracellular; sequence TSIIAYFTHNVFTYMHCYPYFLYDPEKD. The chain crosses the membrane as a helical span at residues 180-200; the sequence is PVWIYISIYALEWLHSTQMVI. Topologically, residues 201–268 are cytoplasmic; it reads SNIGADIWLL…NDLNGIFGKS (68 aa). The helical transmembrane segment at 269-289 threads the bilayer; the sequence is LLLSLLTTAAVICTVAVYTLI. Topologically, residues 290–295 are extracellular; it reads QGPTLE. A helical membrane pass occupies residues 296-316; that stretch reads GFTYVIFIGTSVMQVYLVCYY. The Cytoplasmic portion of the chain corresponds to 317–363; the sequence is GQQVLDLSGEVAHAVYNHDFHDASIAYKRYLLIIIIRAQQPVELNAM. Residues 364–384 form a helical membrane-spanning segment; it reads GYLSISLDTFKQLMSVSYRVI. The Extracellular portion of the chain corresponds to 385–392; that stretch reads TMLMQMIQ.

The protein belongs to the insect chemoreceptor superfamily. Heteromeric odorant receptor channel (TC 1.A.69) family. Or49a subfamily. In terms of assembly, interacts with Orco. Complexes exist early in the endomembrane system in olfactory sensory neurons (OSNs), coupling these complexes to the conserved ciliary trafficking pathway. In terms of tissue distribution, expressed in olfactory sensory neurons in the antenna.

Its subcellular location is the cell membrane. Its function is as follows. Odorant receptor which mediates acceptance or avoidance behavior, depending on its substrates. The odorant receptor repertoire encodes a large collection of odor stimuli that vary widely in identity, intensity, and duration. May form a complex with Orco to form odorant-sensing units, providing sensitive and prolonged odorant signaling and calcium permeability. This chain is Odorant receptor 85f (Or85f), found in Drosophila melanogaster (Fruit fly).